Here is a 325-residue protein sequence, read N- to C-terminus: MEERAAILLLAHGTPDSAEEIPEYLRNVVSGRPMPAEVIEEVRHRFVEIGGSPLTALTLQQGRLLQEALGLPVYVGMRNWKPYIADVVKQMVEDGITRAVAICLAPQNSRTSVGLYRRAVFAEAGQKMQIGFIEGWAEDDLLAAAFADRLRATWEPFRAEVGGPVPVLFTAHSVPCRTVQAPQPDPEAPRRPVLPPDPYNYEAKKTAMHVAAKVDGLDAWYFAFQSQGMSGGPWIGPTVEDTLTALHQEGIRHLVIQPVGFLCDHVEILYDIDIAFRDFAQNLGMMLRRPASLNDSPLLTAALARLAQSGLDRLQASEAPEPAAS.

Positions 172 and 267 each coordinate Fe cation.

This sequence belongs to the ferrochelatase family.

Its subcellular location is the cytoplasm. It carries out the reaction heme b + 2 H(+) = protoporphyrin IX + Fe(2+). Its pathway is porphyrin-containing compound metabolism; protoheme biosynthesis; protoheme from protoporphyrin-IX: step 1/1. Catalyzes the ferrous insertion into protoporphyrin IX. This chain is Ferrochelatase, found in Acidobacterium capsulatum (strain ATCC 51196 / DSM 11244 / BCRC 80197 / JCM 7670 / NBRC 15755 / NCIMB 13165 / 161).